The primary structure comprises 284 residues: Four and a half LIM domains protein 5 (284 aa).

A C4-type zinc finger spans residues 8-32 (CQYCTSSLIGKKYVLKDDNLYCISC). LIM zinc-binding domains lie at 39–100 (NYCE…ECSS), 101–160 (KCFH…KEFA), and 161–220 (HYCN…LYAK).

As to quaternary structure, interacts with CREM (via the third LIM domain). Interacts (via second LIM domain) with SPAG8. As to expression, testis-specific, temporal expression is coordinated with CREM.

The protein resides in the nucleus. Its function is as follows. May be involved in the regulation of spermatogenesis. Stimulates CREM transcriptional activity in a phosphorylation-independent manner. The sequence is that of Four and a half LIM domains protein 5 (Fhl5) from Mus musculus (Mouse).